Reading from the N-terminus, the 98-residue chain is Large ribosomal subunit protein eL14 (98 aa).

The protein belongs to the eukaryotic ribosomal protein eL14 family.

The chain is Large ribosomal subunit protein eL14 from Hyperthermus butylicus (strain DSM 5456 / JCM 9403 / PLM1-5).